The following is a 1883-amino-acid chain: Chromodomain-helicase-DNA-binding protein 1 (1883 aa).

Positions 1 to 14 (MSQALNESANSIGS) are enriched in polar residues. The disordered stretch occupies residues 1 to 293 (MSQALNESAN…SEDEATDSED (293 aa)). The span at 39–56 (SGSDSDSDSSSGNSSDGR) shows a compositional bias: low complexity. Positions 114–128 (QRNQSINNANTSSSL) are enriched in polar residues. Positions 159-172 (DSSANVSPTSSSSS) are enriched in low complexity. Residues 213–226 (SDESDESEDSDDEV) show a composition bias toward acidic residues. A compositionally biased stretch (polar residues) spans 236–247 (ATTSRSKLAQQQ). Positions 284–293 (SEDEATDSED) are enriched in acidic residues. Chromo domains are found at residues 318-414 (ETIE…YWRR) and 439-501 (NNVD…TPSR). The Helicase ATP-binding domain occupies 540-710 (LHSWCKENSV…WALLHFIMPD (171 aa)). Position 553-560 (553-560 (DEMGLGKT)) interacts with ATP. The short motif at 661-664 (DEAH) is the DEAH box element. The Helicase C-terminal domain occupies 840 to 991 (LLDKLLCRLK…HLVIQRMDTT (152 aa)). Disordered regions lie at residues 1074 to 1185 (FEEE…MKEK), 1246 to 1265 (HKEE…AKQR), 1390 to 1491 (TKGG…MHFT), 1599 to 1829 (KAGG…PYSS), and 1848 to 1883 (PPPS…RTQT). Residues 1091-1103 (GEEDDSKDWDDII) show a composition bias toward acidic residues. A compositionally biased stretch (basic and acidic residues) spans 1106-1121 (GFRKAIDDQERAKEME). Residues 1393-1402 (GQRRQRRPRA) are compositionally biased toward basic residues. Residues 1437 to 1451 (AESSNSQVDPSTASP) show a composition bias toward polar residues. The segment covering 1466-1476 (KAKKSKARSKK) has biased composition (basic residues). The interval 1505-1606 (LDPSIFNECK…KQKAGGDGEA (102 aa)) is CHD1 helical C-terminal domain (CHCT). Over residues 1600–1612 (AGGDGEAKGKDKG) the composition is skewed to basic and acidic residues. A compositionally biased stretch (low complexity) spans 1613 to 1622 (SSGSPAKSKP). Positions 1627–1638 (TEEKEKERDRSG) are enriched in basic and acidic residues. Over residues 1724-1738 (YYGGSGPPMGSGSYE) the composition is skewed to gly residues. Polar residues predominate over residues 1742-1755 (NSRRQGPTSPSTPR). Composition is skewed to basic and acidic residues over residues 1773–1794 (EMER…RYDG), 1805–1817 (YHRE…EKRR), and 1868–1883 (YPAD…RTQT).

It belongs to the SNF2/RAD54 helicase family. As to quaternary structure, monomer. Component of the SAGA complex. Interacts with SSRP1.

The protein resides in the nucleus. It is found in the chromosome. It carries out the reaction ATP + H2O = ADP + phosphate + H(+). In terms of biological role, ATP-dependent chromatin-remodeling factor which functions as substrate recognition component of the transcription regulatory histone acetylation (HAT) complex SAGA. Regulates polymerase II transcription. Also required for efficient transcription by RNA polymerase I, and more specifically the polymerase I transcription termination step. Regulates negatively DNA replication. Not only involved in transcription-related chromatin remodeling, but also required to maintain a specific chromatin configuration across the genome. Involved in assembly of active chromatin. Required for maintaining open chromatin and pluripotency in embryonic stem cells and is important for wing development and fertility. Is essential for the incorporation of histone H3.3 and assembly of paternal chromatin. Required for replication-independent nucleosome assembly in the decondensing male pronucleus. The chain is Chromodomain-helicase-DNA-binding protein 1 (Chd1) from Drosophila melanogaster (Fruit fly).